Consider the following 98-residue polypeptide: EKC/KEOPS complex subunit GON7 (98 aa).

The residue at position 1 (M1) is an N-acetylmethionine. The tract at residues D55–S98 is disordered. Residues E61 to N79 are compositionally biased toward acidic residues.

In terms of assembly, component of the EKC/KEOPS complex composed of at least GON7, TP53RK, TPRKB, OSGEP and LAGE3; the whole complex dimerizes.

The protein resides in the nucleus. Functionally, component of the EKC/KEOPS complex that is required for the formation of a threonylcarbamoyl group on adenosine at position 37 (t(6)A37) in tRNAs that read codons beginning with adenine. The complex is probably involved in the transfer of the threonylcarbamoyl moiety of threonylcarbamoyl-AMP (TC-AMP) to the N6 group of A37. GON7 plays a supporting role to the catalytic subunit OSGEP in the complex. This is EKC/KEOPS complex subunit GON7 from Mus musculus (Mouse).